A 248-amino-acid chain; its full sequence is MNVLISNDDGYLSEGIAVLARVTAEFANVRVVAPERDRSGVSNSLTLERPLQLKQAQNGFYYVNGTPTDCIHIGQSVFSDFQADFVFSGINRGANMGDDTLYSGTVAAATEAYLMGMPAVAFSLNDASGRYWATAEQALWTLLAHFFKNPPQSPILWNINIPAVAPEDVRGIKIARLGRRHHGQNVIPARNPRGEQIYWIGPVGEVSDREEGTDFGECEAGFITVTPLQIDLTAYRDMAETAVFWHTD.

Residues Asp8, Asp9, Ser39, and Asn91 each coordinate a divalent metal cation.

Belongs to the SurE nucleotidase family. Requires a divalent metal cation as cofactor.

The protein resides in the cytoplasm. The catalysed reaction is a ribonucleoside 5'-phosphate + H2O = a ribonucleoside + phosphate. Its function is as follows. Nucleotidase that shows phosphatase activity on nucleoside 5'-monophosphates. This chain is 5'-nucleotidase SurE, found in Neisseria meningitidis serogroup A / serotype 4A (strain DSM 15465 / Z2491).